A 307-amino-acid polypeptide reads, in one-letter code: Small ribosomal subunit protein bS1 (307 aa).

S1 motif domains are found at residues 32–101 (GDTV…LSIR), 119–183 (DATV…LSHR), and 197–265 (GEVV…LSTK).

The protein belongs to the bacterial ribosomal protein bS1 family.

In terms of biological role, binds mRNA. In Synechococcus sp. (strain ATCC 27144 / PCC 6301 / SAUG 1402/1) (Anacystis nidulans), this protein is Small ribosomal subunit protein bS1 (rpsA).